The chain runs to 211 residues: Large ribosomal subunit protein eL13 (211 aa).

The protein belongs to the eukaryotic ribosomal protein eL13 family. As to quaternary structure, component of the 60S large ribosomal subunit (LSU).

It is found in the cytoplasm. Component of the ribosome, a large ribonucleoprotein complex responsible for the synthesis of proteins in the cell. The small ribosomal subunit (SSU) binds messenger RNAs (mRNAs) and translates the encoded message by selecting cognate aminoacyl-transfer RNA (tRNA) molecules. The large subunit (LSU) contains the ribosomal catalytic site termed the peptidyl transferase center (PTC), which catalyzes the formation of peptide bonds, thereby polymerizing the amino acids delivered by tRNAs into a polypeptide chain. The nascent polypeptides leave the ribosome through a tunnel in the LSU and interact with protein factors that function in enzymatic processing, targeting, and the membrane insertion of nascent chains at the exit of the ribosomal tunnel. As part of the LSU, it is probably required for its formation and the maturation of rRNAs. This is Large ribosomal subunit protein eL13 (RPL13) from Gallus gallus (Chicken).